The primary structure comprises 152 residues: Protein-export protein SecB (152 aa).

Belongs to the SecB family. Homotetramer, a dimer of dimers. One homotetramer interacts with 1 SecA dimer.

It localises to the cytoplasm. Its function is as follows. One of the proteins required for the normal export of preproteins out of the cell cytoplasm. It is a molecular chaperone that binds to a subset of precursor proteins, maintaining them in a translocation-competent state. It also specifically binds to its receptor SecA. The chain is Protein-export protein SecB from Rickettsia rickettsii (strain Iowa).